The following is a 366-amino-acid chain: N-methyltransferase fsqC (366 aa).

The first 18 residues, 1–18, serve as a signal peptide directing secretion; sequence MSSNVQDIRGWPPPFANA. A glycan (N-linked (GlcNAc...) asparagine) is linked at asparagine 270.

The protein belongs to the methyltransferase superfamily.

It functions in the pathway secondary metabolite biosynthesis. N-methyltransferase; part of the gene cluster that mediates the biosynthesis of the isoquinoline alkaloids fumisoquin A, fumisoquin B and fumisoquin C; as well as small amounts of fumipyrrole as a shunt metabolite. The products of the cluster lead to a brown coloration and are important for growth and conidiation. The nonribosomal peptide synthetase-like protein fsqF, which lacks a canonical condensation domain, is required for addition of a serine-derived dehydroalanine moiety to activated tyrosine but is not essential for the subsequent steps leading to isoquinoline formation. A different enzyme, most likely the ATP-grasp enzyme fsqD, is responsible for activation of tyrosine. Three additional enzymes encoded by the fsq cluster, the N-methyltransferase fsqC, the phenol 2-monooxygenase fsqG and the FAD-dependent oxidase fsqB, catalyze the formation of the isoquinoline ring system in the fumisoquins. FsqB converts the fspF thiolation domain-bound (2S,4S,5S)-2-amino-6-(3,4-dihydroxyphenyl)-4-hydroxy-5-(methylamino)hexanoyl into isoquinoline. The cyclization most likely proceeds via a two-step mechanism, beginning with FAD-dependent oxidation of the methyl group to an iminium species followed by electrophilic attack on the deprotonated phenol. The chain is N-methyltransferase fsqC from Aspergillus fumigatus (strain ATCC MYA-4609 / CBS 101355 / FGSC A1100 / Af293) (Neosartorya fumigata).